We begin with the raw amino-acid sequence, 119 residues long: Venom allergen 2 (119 aa).

This sequence belongs to the ant venom allergen 2/4 family. Homodimer; disulfide-linked. Expressed by the venom gland.

It localises to the secreted. This chain is Venom allergen 2, found in Solenopsis richteri (Black imported fire ant).